The chain runs to 421 residues: Zinc finger protein 57 (421 aa).

The KRAB domain occupies 15-88; that stretch reads VSYEDVAVSF…SCTGVFKGGP (74 aa). The segment at 90 to 113 adopts a C2H2-type 1; degenerate zinc-finger fold; that stretch reads FFCLTCGKCFKKNTFLFNHQFPVR. 2 consecutive C2H2-type zinc fingers follow at residues 140–162 and 168–190; these read FFCNFCGKTYRDASGLSRHRRAH and RSCPECGKCFRDQSEVNRHLKVH. The interval 191 to 221 is disordered; it reads QNKPAASNQAGNQASNQRLKSRVPPTTPRSQ. Low complexity predominate over residues 195–207; sequence AASNQAGNQASNQ. The segment at 264–286 adopts a C2H2-type 4 zinc-finger fold; that stretch reads ISCPYCHITFTMRTCLLTHLKIH. The C2H2-type 5; degenerate zinc finger occupies 313–332; that stretch reads YTCPVCDSSFRGKESLLDHL. The tract at residues 371–421 is disordered; sequence GKRMESRRRRRKRACTENPETEGLSGKGRVAPWEMEGATSPESPVTEEDSD.

The protein belongs to the krueppel C2H2-type zinc-finger protein family. As to expression, expressed in oocytes and in a subset of adult tissues. Expressed at high levels in testis, and at low levels in cerebellum. Present in sciatic nerve and spinal cord (at protein level).

Its subcellular location is the nucleus. In terms of biological role, transcription regulator required to maintain maternal and paternal gene imprinting, a process by which gene expression is restricted in a parent of origin-specific manner by epigenetic modification of genomic DNA and chromatin, including DNA methylation. Acts by controlling DNA methylation during the earliest multicellular stages of development at multiple imprinting control regions (ICRs). Acts together with ZNF445, but ZFP57 plays the predominant role in imprinting maintenance. In contrast, in humans, ZNF445 seems to be the major factor early embryonic imprinting maintenance. Required for the establishment of maternal methylation imprints at SNRPN locus. Acts as a transcriptional repressor in Schwann cells. Binds to a 5'-TGCCGC-3' consensus sequence and recognizes the methylated CpG within this element. In Mus musculus (Mouse), this protein is Zinc finger protein 57 (Zfp57).